A 255-amino-acid chain; its full sequence is Folate receptor beta (255 aa).

Positions 1 to 16 (MVWKWMPLLLLLVCVA) are cleaved as a signal peptide. 8 disulfides stabilise this stretch: Cys31-Cys59, Cys51-Cys99, Cys60-Cys103, Cys83-Cys169, Cys90-Cys140, Cys129-Cys203, Cys133-Cys183, and Cys146-Cys163. Residues Asp97 and Tyr101 each contribute to the folate site. Asn115 is a glycosylation site (N-linked (GlcNAc...) asparagine). Folate contacts are provided by residues 118–122 (WRKER), 151–156 (HRGWDW), and Ser190. Asn195 carries N-linked (GlcNAc...) asparagine glycosylation. Asn230 carries GPI-anchor amidated asparagine lipidation. A propeptide spans 231–255 (AGEMLHGTGGLLLSLALMLQLWLLG) (removed in mature form).

Belongs to the folate receptor family. Post-translationally, N-glycosylated. In terms of tissue distribution, expressed in placenta and hematopoietic cells. Expression is increased in malignant tissues.

It localises to the cell membrane. It is found in the secreted. Binds to folate and reduced folic acid derivatives and mediates delivery of 5-methyltetrahydrofolate and folate analogs into the interior of cells. Has high affinity for folate and folic acid analogs at neutral pH. Exposure to slightly acidic pH after receptor endocytosis triggers a conformation change that strongly reduces its affinity for folates and mediates their release. The protein is Folate receptor beta (FOLR2) of Homo sapiens (Human).